A 170-amino-acid polypeptide reads, in one-letter code: Probable inosine/xanthosine triphosphatase (170 aa).

Position 7 to 12 (7 to 12 (TTNPVK)) interacts with substrate. Position 37 (Asp37) interacts with Mg(2+).

It belongs to the YjjX NTPase family. As to quaternary structure, homodimer. The cofactor is Mg(2+). Mn(2+) serves as cofactor.

The catalysed reaction is XTP + H2O = XDP + phosphate + H(+). It catalyses the reaction ITP + H2O = IDP + phosphate + H(+). Its function is as follows. Phosphatase that hydrolyzes non-canonical purine nucleotides such as XTP and ITP to their respective diphosphate derivatives. Probably excludes non-canonical purines from DNA/RNA precursor pool, thus preventing their incorporation into DNA/RNA and avoiding chromosomal lesions. This is Probable inosine/xanthosine triphosphatase from Methanopyrus kandleri (strain AV19 / DSM 6324 / JCM 9639 / NBRC 100938).